Reading from the N-terminus, the 339-residue chain is Ketol-acid reductoisomerase (NADP(+)) (339 aa).

Residues 1-182 (MRVYYDRDAD…GGGRSGIIET (182 aa)) form the KARI N-terminal Rossmann domain. NADP(+)-binding positions include 24 to 27 (YGSQ), arginine 48, serine 51, serine 53, and 83 to 86 (DELQ). Histidine 108 is a catalytic residue. NADP(+) is bound at residue glycine 134. In terms of domain architecture, KARI C-terminal knotted spans 183–328 (TFREECETDL…EKLRGMMPWI (146 aa)). Mg(2+) is bound by residues aspartate 191, glutamate 195, glutamate 227, and glutamate 231. Serine 252 contacts substrate.

The protein belongs to the ketol-acid reductoisomerase family. Requires Mg(2+) as cofactor.

The enzyme catalyses (2R)-2,3-dihydroxy-3-methylbutanoate + NADP(+) = (2S)-2-acetolactate + NADPH + H(+). It carries out the reaction (2R,3R)-2,3-dihydroxy-3-methylpentanoate + NADP(+) = (S)-2-ethyl-2-hydroxy-3-oxobutanoate + NADPH + H(+). The protein operates within amino-acid biosynthesis; L-isoleucine biosynthesis; L-isoleucine from 2-oxobutanoate: step 2/4. Its pathway is amino-acid biosynthesis; L-valine biosynthesis; L-valine from pyruvate: step 2/4. Functionally, involved in the biosynthesis of branched-chain amino acids (BCAA). Catalyzes an alkyl-migration followed by a ketol-acid reduction of (S)-2-acetolactate (S2AL) to yield (R)-2,3-dihydroxy-isovalerate. In the isomerase reaction, S2AL is rearranged via a Mg-dependent methyl migration to produce 3-hydroxy-3-methyl-2-ketobutyrate (HMKB). In the reductase reaction, this 2-ketoacid undergoes a metal-dependent reduction by NADPH to yield (R)-2,3-dihydroxy-isovalerate. The sequence is that of Ketol-acid reductoisomerase (NADP(+)) from Magnetospirillum molischianum (Rhodospirillum molischianum).